The sequence spans 349 residues: uncharacterized protein (349 aa).

Residues 1 to 26 form the signal peptide; the sequence is MQSHAGGSRAPLGLLLICLCLPGLFA. Disordered stretches follow at residues 30 to 113 and 322 to 349; these read GAPE…QGMA and YPAG…GITP. Over residues 39 to 52 the composition is skewed to polar residues; it reads HSGQPSFTSLLNPG. Over residues 90–101 the composition is skewed to pro residues; sequence NGPPFWGPPPME.

Binds to numerous extracellular matrix proteins.

The protein localises to the secreted. Its subcellular location is the extracellular space. The protein resides in the extracellular matrix. This is an uncharacterized protein from Mus musculus (Mouse).